We begin with the raw amino-acid sequence, 310 residues long: Acetylglutamate kinase (310 aa).

Residues 76 to 77 (GG), arginine 98, and asparagine 203 contribute to the substrate site.

This sequence belongs to the acetylglutamate kinase family. ArgB subfamily.

It is found in the cytoplasm. It carries out the reaction N-acetyl-L-glutamate + ATP = N-acetyl-L-glutamyl 5-phosphate + ADP. Its pathway is amino-acid biosynthesis; L-arginine biosynthesis; N(2)-acetyl-L-ornithine from L-glutamate: step 2/4. In terms of biological role, catalyzes the ATP-dependent phosphorylation of N-acetyl-L-glutamate. The sequence is that of Acetylglutamate kinase from Cutibacterium acnes (strain DSM 16379 / KPA171202) (Propionibacterium acnes).